The following is a 427-amino-acid chain: Glutamate-1-semialdehyde 2,1-aminomutase (427 aa).

Position 265 is an N6-(pyridoxal phosphate)lysine (lysine 265).

This sequence belongs to the class-III pyridoxal-phosphate-dependent aminotransferase family. HemL subfamily. Homodimer. Requires pyridoxal 5'-phosphate as cofactor.

The protein localises to the cytoplasm. The enzyme catalyses (S)-4-amino-5-oxopentanoate = 5-aminolevulinate. Its pathway is porphyrin-containing compound metabolism; protoporphyrin-IX biosynthesis; 5-aminolevulinate from L-glutamyl-tRNA(Glu): step 2/2. The protein is Glutamate-1-semialdehyde 2,1-aminomutase of Pseudomonas entomophila (strain L48).